The chain runs to 402 residues: S-adenosylmethionine synthase (402 aa).

Residue His-16 participates in ATP binding. Asp-18 is a binding site for Mg(2+). Glu-44 contributes to the K(+) binding site. L-methionine contacts are provided by Glu-57 and Gln-103. The segment at Gln-103–Thr-113 is flexible loop. Residues Asp-178–Lys-180, Lys-249–Phe-250, Asp-258, Arg-264–Lys-265, Ala-281, and Lys-285 contribute to the ATP site. Asp-258 contributes to the L-methionine binding site. Lys-289 is an L-methionine binding site.

This sequence belongs to the AdoMet synthase family. In terms of assembly, homotetramer; dimer of dimers. The cofactor is Mg(2+). It depends on K(+) as a cofactor.

The protein localises to the cytoplasm. The catalysed reaction is L-methionine + ATP + H2O = S-adenosyl-L-methionine + phosphate + diphosphate. Its pathway is amino-acid biosynthesis; S-adenosyl-L-methionine biosynthesis; S-adenosyl-L-methionine from L-methionine: step 1/1. Functionally, catalyzes the formation of S-adenosylmethionine (AdoMet) from methionine and ATP. The overall synthetic reaction is composed of two sequential steps, AdoMet formation and the subsequent tripolyphosphate hydrolysis which occurs prior to release of AdoMet from the enzyme. This is S-adenosylmethionine synthase from Mycobacterium sp. (strain JLS).